Consider the following 346-residue polypeptide: Dynein regulatory complex protein 9 (346 aa).

A compositionally biased stretch (basic and acidic residues) spans 299–308; that stretch reads MEKEQREKNA. A disordered region spans residues 299–346; that stretch reads MEKEQREKNAATKIQAWWRGTLVRKGPRSKKADKSKKKDGKKGKKKRK. One can recognise an IQ domain in the interval 305–334; sequence EKNAATKIQAWWRGTLVRKGPRSKKADKSK. The segment covering 323–346 has biased composition (basic residues); the sequence is KGPRSKKADKSKKKDGKKGKKKRK.

Belongs to the DRC9 family. In terms of assembly, component of the nexin-dynein regulatory complex (N-DRC). Interacts (via IQ domain) with calmodulin when calcium levels are low. Does not interact with calmodulin in the presence of Ca(2+). Interacts with hsp70 and may form a complex with camk4 and hsp70. Detected in adult testis, and at lower levels in brain, kidney and ovary.

It is found in the cytoplasm. The protein resides in the cell projection. Its subcellular location is the cilium. The protein localises to the flagellum. It localises to the cytoskeleton. It is found in the flagellum axoneme. Its function is as follows. Component of the nexin-dynein regulatory complex (N-DRC), a key regulator of ciliary/flagellar motility which maintains the alignment and integrity of the distal axoneme and regulates microtubule sliding in motile axonemes. Binds calmodulin when cellular Ca(2+) levels are low and thereby contributes to the regulation of calcium and calmodulin-dependent protein kinase IV (camk4) activity; contributes to the regulation of camk4 signaling cascades. Plays a role in the regulation of definitive hematopoiesis via its effects on camk4. The chain is Dynein regulatory complex protein 9 from Danio rerio (Zebrafish).